Here is a 663-residue protein sequence, read N- to C-terminus: Probable acetolactate synthase 2, chloroplastic (663 aa).

Residues 1–26 are compositionally biased toward low complexity; the sequence is MAAAAAAASLSVSDAAAKLPKPGGQV. Positions 1–56 are disordered; the sequence is MAAAAAAASLSVSDAAAKLPKPGGQVQRRRDRDRPRVDAAACTRDSRRPTRERCST. Residues 1–79 constitute a chloroplast transit peptide; that stretch reads MAAAAAAASL…TPVRAPVRTR (79 aa). 2 stretches are compositionally biased toward basic and acidic residues: residues 28-37 and 44-54; these read RRRDRDRPRV and RDSRRPTRERC. A thiamine diphosphate-binding site is contributed by glutamate 132. An intrachain disulfide couples cysteine 152 to cysteine 298. FAD is bound by residues arginine 234, 340–361, and 383–402; these read HGTV…LGVR and DIDP…ICAD. The segment at 478 to 558 is thiamine pyrophosphate binding; that stretch reads QHQMWATQHY…VKVMVLNNQH (81 aa). 2 residues coordinate Mg(2+): aspartate 529 and asparagine 556.

It belongs to the TPP enzyme family. Requires Mg(2+) as cofactor. Thiamine diphosphate is required as a cofactor.

Its subcellular location is the plastid. The protein localises to the chloroplast. The catalysed reaction is 2 pyruvate + H(+) = (2S)-2-acetolactate + CO2. It participates in amino-acid biosynthesis; L-isoleucine biosynthesis; L-isoleucine from 2-oxobutanoate: step 1/4. Its pathway is amino-acid biosynthesis; L-valine biosynthesis; L-valine from pyruvate: step 1/4. The polypeptide is Probable acetolactate synthase 2, chloroplastic (ALS2) (Oryza sativa subsp. japonica (Rice)).